Consider the following 278-residue polypeptide: Prohibitin-7, mitochondrial (278 aa).

Topologically, residues 1 to 14 are mitochondrial matrix; that stretch reads MNVKKVPNVPGSPA. The chain crosses the membrane as a helical; Signal-anchor for type II membrane protein span at residues 15-37; the sequence is LSALLKLGVIGGLGLYCIGSSMY. The Mitochondrial intermembrane segment spans residues 38-278; sequence NVDGGHRAIV…NSSDLLISKQ (241 aa). Residues 186 to 220 adopt a coiled-coil conformation; that stretch reads KEFTEAIEKKQVAAQEAERAKFIVEKAEQDKKSAI.

Belongs to the prohibitin family. Component of a prohibitin multimeric complex in mitochondrial membranes.

Its subcellular location is the mitochondrion inner membrane. In terms of biological role, prohibitin probably acts as a holdase/unfoldase for the stabilization of newly synthesized mitochondrial proteins. This Arabidopsis thaliana (Mouse-ear cress) protein is Prohibitin-7, mitochondrial (PHB7).